Consider the following 675-residue polypeptide: MTRKILVTSALPYANGPIHLGHLVEYIQTDIWARFQRLRGHDCHYVCADDAHGTPIMLKARERGITPEALIAEVGEEHQRDFADFLIEFDNYHTTHSDENRYFAELIYSRLNQAGHIDRKVIKQAYDPKLEMFLPDRYIKGECPRCGAEDQYGDSCEACGATYTPAELKNAVSVVSGERPVERESEHYFFRLQDFEAMLREWASPEHLQAEVANKLAEWFKEGLRSWDISRDAPYFGFRIPDTEDKYFYVWLDAPIGYMASFKHLCERKGLDFDDWWGPDSTAELYHFIGKDIIYFHALFWPAMLHGAGFRKPTEICAHGFLTVNGQKMSKSRGTFIMARTWLDHLNPEYLRYYFAAKLSASVHDLDLSLDDFTQRVNADLVGKLVNIASRCAGFIHKRFEGRLGETLDDPALYRQFTAAGEHIAELYEKREFSRAMREIMALADQANQYVDEQKPWVLAKQEDQADRVQDICTQGLNLFRVLVVYLKPVLPRLAADAEAFLNLPEQCWADAKTPLLDHGIRKFKPLMTRVDPDRVQAMLEDSKKTLQPKGEPQAAEAGPLTSDPIAEQIEIGDFAKVDLRIARIEQAEHVEGADKLLRLQLDLGGETRQVFAGIKQAYRPEDLEGRLTVMAANLKPRKMKFGVSEGMVLAAGPGGSDLYLLEPHQGAQPGMRVK.

The 'HIGH' region signature appears at 12–22 (PYANGPIHLGH). Residues cysteine 143, cysteine 146, cysteine 156, and cysteine 159 each coordinate Zn(2+). The 'KMSKS' region signature appears at 328 to 332 (KMSKS). An ATP-binding site is contributed by lysine 331. One can recognise a tRNA-binding domain in the interval 574 to 675 (DFAKVDLRIA…QGAQPGMRVK (102 aa)).

Belongs to the class-I aminoacyl-tRNA synthetase family. MetG type 1 subfamily. In terms of assembly, homodimer. Requires Zn(2+) as cofactor.

The protein resides in the cytoplasm. The catalysed reaction is tRNA(Met) + L-methionine + ATP = L-methionyl-tRNA(Met) + AMP + diphosphate. In terms of biological role, is required not only for elongation of protein synthesis but also for the initiation of all mRNA translation through initiator tRNA(fMet) aminoacylation. The protein is Methionine--tRNA ligase of Alkalilimnicola ehrlichii (strain ATCC BAA-1101 / DSM 17681 / MLHE-1).